The primary structure comprises 98 residues: Alpha-elicitin capsicein (98 aa).

Cystine bridges form between cysteine 3–cysteine 71, cysteine 27–cysteine 56, and cysteine 51–cysteine 95.

The protein belongs to the elicitin family.

It localises to the secreted. In terms of biological role, induces local and distal defense responses (incompatible hypersensitive reaction) in plants from the solanaceae and cruciferae families. Elicits leaf necrosis and causes the accumulation of pathogenesis-related proteins. Might interact with the lipidic molecules of the plasma membrane. The polypeptide is Alpha-elicitin capsicein (Phytophthora capsici).